The sequence spans 776 residues: LPS-assembly protein LptD (776 aa).

The N-terminal stretch at 1 to 24 is a signal peptide; that stretch reads MQHFSRTFLAASIATALFAPYAQA.

The protein belongs to the LptD family. As to quaternary structure, component of the lipopolysaccharide transport and assembly complex. Interacts with LptE and LptA.

The protein resides in the cell outer membrane. Functionally, together with LptE, is involved in the assembly of lipopolysaccharide (LPS) at the surface of the outer membrane. This Vibrio vulnificus (strain YJ016) protein is LPS-assembly protein LptD.